The following is a 305-amino-acid chain: MVRNKKNKYAMHPRNILRVPPDYTKLAIKYRDFRQVCELELTGKVSVNFRNEKTLRELSKMLLKEYFELDVDFAPGSLVPTLALRLNYILWLEDMLLPLNLETVRGIDVGCGSSCIYSLLGAKKNGWNMLALESKEENIDYARENVRRNNLEDLIEVYAQPDKSNIFKSYFETEKLRKEFHFCLCNPPFFDSNSPNPFGGNTRNPQRRPAPNNVRTGSAEELTCEGGEVHFVQRIIEESQLNKQRVLIFTSMLGVKASVPKILDYLKERQITNVTTTEFHQGHTTRWAVAWSHQPTPLSPGTQCN.

Residues Arg85, Gly110, Glu133, Ser164, and Asn186 each contribute to the S-adenosyl-L-methionine site. A disordered region spans residues 194–217 (SPNPFGGNTRNPQRRPAPNNVRTG).

Belongs to the methyltransferase superfamily. METTL16/RlmF family.

It catalyses the reaction adenosine in U6 snRNA + S-adenosyl-L-methionine = N(6)-methyladenosine in U6 snRNA + S-adenosyl-L-homocysteine + H(+). Functionally, RNA N6-methyltransferase that mediates N6-methylation of adenine of U6 small nuclear RNA (U6 snRNA). The polypeptide is U6 small nuclear RNA (adenine-(43)-N(6))-methyltransferase (Drosophila pseudoobscura pseudoobscura (Fruit fly)).